Consider the following 1184-residue polypeptide: von Willebrand factor A domain-containing protein 3A (1184 aa).

The signal sequence occupies residues 1 to 24; sequence MKKYRKISIGCFAMATQTSHVFHG. Residues 40 to 62 are disordered; the sequence is GRDSKKPLKQKNMNGLGQNSDNG. Residues 50 to 62 are compositionally biased toward polar residues; it reads KNMNGLGQNSDNG. Residues 333 to 357 adopt a coiled-coil conformation; that stretch reads TSRDMDELLAEIQKAQSLLSHVQAL. Positions 511–708 constitute a VWFA 1 domain; it reads RVVVLLDISA…SIMSEMEKAL (198 aa). Residue Asn709 is glycosylated (N-linked (GlcNAc...) asparagine). The disordered stretch occupies residues 729–780; that stretch reads LGSSALPKEKPKTLQLRSQPKKLCPPRPTVPLGARMSIKDDPDREKSPPLKS. A compositionally biased stretch (basic and acidic residues) spans 765-776; the sequence is SIKDDPDREKSP. One can recognise a VWFA 2 domain in the interval 959-1131; the sequence is KVCILLDTSG…KIHSLLTKGF (173 aa).

The protein localises to the secreted. The protein is von Willebrand factor A domain-containing protein 3A (VWA3A) of Homo sapiens (Human).